A 537-amino-acid chain; its full sequence is DNA-directed primase/polymerase protein (537 aa).

The stretch at 1-22 (MLRKWEARVKQIEERASHYERK) forms a coiled coil. Substrate contacts are provided by residues R76, 114-116 (DLE), 165-169 (KFSRH), 270-273 (RNFR), and K279. Mn(2+) contacts are provided by D114 and E116. Residues C401, H408, C428, and C433 each contribute to the Zn(2+) site. The Zinc knuckle motif signature appears at 401–434 (CENIGRAHKSNNIMILVDLKNEVWYQKCHDPVCK). The tract at residues 462 to 481 (SGETDDTSTSLTKDSQTPPS) is disordered. The tract at residues 462–536 (SGETDDTSTS…DELIIEALQN (75 aa)) is interaction with RPA1. Residues 468–478 (TSTSLTKDSQT) are compositionally biased toward low complexity. 2 consecutive short sequence motifs (RPA1-binding motif) follow at residues 494–507 (WDDE…EATE) and 524–532 (DIPDELIIE).

Belongs to the eukaryotic-type primase small subunit family. In terms of assembly, interacts with RPA1; leading to recruitment to chromatin and stimulate DNA primase activity. Interacts with SSBP1. Interacts with POLDIP2; leading to enhance DNA polymerase activity. Requires Mn(2+) as cofactor.

The protein resides in the nucleus. It is found in the mitochondrion matrix. It localises to the chromosome. The enzyme catalyses ssDNA + n NTP = ssDNA/pppN(pN)n-1 hybrid + (n-1) diphosphate.. It catalyses the reaction DNA(n) + a 2'-deoxyribonucleoside 5'-triphosphate = DNA(n+1) + diphosphate. Its function is as follows. DNA primase and DNA polymerase required to tolerate replication-stalling lesions by bypassing them. Required to facilitate mitochondrial and nuclear replication fork progression by initiating de novo DNA synthesis using dNTPs and acting as an error-prone DNA polymerase able to bypass certain DNA lesions. Shows a high capacity to tolerate DNA damage lesions such as 8oxoG and abasic sites in DNA. Provides different translesion synthesis alternatives when DNA replication is stalled: able to synthesize DNA primers downstream of lesions, such as ultraviolet (UV) lesions, R-loops and G-quadruplexes, to allow DNA replication to continue. Can also realign primers ahead of 'unreadable lesions' such as abasic sites and 6-4 photoproduct (6-4 pyrimidine-pyrimidinone), thereby skipping the lesion. Repriming avoids fork degradation while leading to accumulation of internal ssDNA gaps behind the forks. Also able to incorporate nucleotides opposite DNA lesions such as 8oxoG, like a regular translesion synthesis DNA polymerase. Also required for reinitiating stalled forks after UV damage during nuclear DNA replication. Required for mitochondrial DNA (mtDNA) synthesis and replication, by reinitiating synthesis after UV damage or in the presence of chain-terminating nucleotides. Prevents APOBEC family-mediated DNA mutagenesis by repriming downstream of abasic site to prohibit error-prone translesion synthesis. Has non-overlapping function with POLH. In addition to its role in DNA damage response, also required to maintain efficient nuclear and mitochondrial DNA replication in unperturbed cells. This Mus musculus (Mouse) protein is DNA-directed primase/polymerase protein.